A 206-amino-acid chain; its full sequence is Protein SYM1 (206 aa).

Transmembrane regions (helical) follow at residues 16-36 (PLIT…YLAQ), 103-123 (LVFA…VLEF), and 155-175 (LFNF…IFSI).

The protein belongs to the peroxisomal membrane protein PXMP2/4 family.

It localises to the mitochondrion inner membrane. In terms of biological role, may be involved in cellular response to stress. Required to maintain mitochondrial DNA (mtDNA) integrity and stability. This Debaryomyces hansenii (strain ATCC 36239 / CBS 767 / BCRC 21394 / JCM 1990 / NBRC 0083 / IGC 2968) (Yeast) protein is Protein SYM1 (SYM1).